An 845-amino-acid polypeptide reads, in one-letter code: P protein (845 aa).

Residues 1 to 57 (MRLENREGRPTSGVLEMELPQASAPSRAGLGSLGLVGLDSSNHRPQQGGSKAGSRGP) form a disordered region. Topologically, residues 1-183 (MRLENREGRP…HLSKLRCCVQ (183 aa)) are extracellular. Residues 26 to 40 (SRAGLGSLGLVGLDS) show a composition bias toward low complexity. Residues 184-204 (WLKVSGLFVFVVLCSILFSLY) form a helical membrane-spanning segment. The Cytoplasmic portion of the chain corresponds to 205-337 (PDQGKFWQLL…QYLRASIEAQ (133 aa)). Residues 338–358 (VTIAAVILAGVYVLIIFEIVH) form a helical membrane-spanning segment. Residues 359–360 (RT) are Extracellular-facing. The helical transmembrane segment at 361 to 381 (LAAMLGSLAALAALAVIGDRP) threads the bilayer. Over 382–393 (TLTQVVEWIDFE) the chain is Cytoplasmic. The chain crosses the membrane as a helical span at residues 394–414 (TLALLFGMMILVAIFSETGFF). The Extracellular segment spans residues 415 to 429 (DYCAVKAYQLSRGRV). The chain crosses the membrane as a helical span at residues 430–450 (WAMIIMLCLIAAVLSAFLDNV). At 451-513 (TTALLFTPVT…ELRKMGLDFA (63 aa)) the chain is on the cytoplasmic side. The chain crosses the membrane as a helical span at residues 514–534 (GFTAHMFAGICFVLLFSFPLL). Residues 535 to 629 (RLLYWNRKLY…KKHRISDRTL (95 aa)) lie on the Extracellular side of the membrane. The helical transmembrane segment at 630-650 (LTKCVTVLGLVIFMFFLNSFV) threads the bilayer. Position 651 (Pro651) is a topological domain, cytoplasmic. The helical transmembrane segment at 652–672 (GVHLDLGWIAILGAIWLLILA) threads the bilayer. Over 673–687 (DIHDFEIILHRVEWA) the chain is Extracellular. The chain crosses the membrane as a helical span at residues 688–708 (TLLFFAALFILMEALAHLHLI). Residues 709 to 730 (EYVGEQTALLIKMVPEDQRLAA) are Cytoplasmic-facing. The chain crosses the membrane as a helical span at residues 731-751 (AIIVVVWVSAIASSLIDNIPF). At 752-773 (TATMIPVLLNLSRDPEISLPAP) the chain is on the extracellular side. The helical transmembrane segment at 774–794 (PLMYALALGACLGGNGTLIGA) threads the bilayer. Residues 795–820 (SANVVCAGIAEQHGYGFSFMEFFRLG) are Cytoplasmic-facing. Residues 821-841 (FPMMVVSCMVGMCYLLVAHVV) form a helical membrane-spanning segment. Residues 842 to 845 (MGWN) are Extracellular-facing.

Belongs to the CitM (TC 2.A.11) transporter family.

The protein localises to the melanosome membrane. It carries out the reaction chloride(in) = chloride(out). In terms of biological role, contributes to a melanosome-specific anion (chloride) current that modulates melanosomal pH for optimal tyrosinase activity required for melanogenesis and the melanosome maturation. One of the components of the mammalian pigmentary system. May serve as a key control point at which ethnic skin color variation is determined. Major determinant of brown and/or blue eye color. Seems to regulate the post-translational processing of tyrosinase, which catalyzes the limiting reaction in melanin synthesis. The sequence is that of P protein (Oca2) from Sus scrofa (Pig).